Consider the following 157-residue polypeptide: Eukaryotic translation initiation factor 5A-2 (157 aa).

N-acetylserine is present on serine 2. Residue serine 2 is modified to Phosphoserine. Threonine 7 carries the phosphothreonine modification. Lysine 51 bears the Hypusine mark. A Phosphoserine modification is found at serine 74. Lysine 86 is covalently cross-linked (Glycyl lysine isopeptide (Lys-Gly) (interchain with G-Cter in ubiquitin)).

It belongs to the eIF-5A family. In terms of assembly, homodimer. Binds to 80S ribosomes. Actively translating ribosomes show mutually exclusive binding of eIF5a (HYP2 or ANB1) and EFT1/eEF2. Interacts with DYS1 and LIA1. Lys-51 undergoes hypusination, a unique post-translational modification that consists in the addition of a butylamino group from spermidine to lysine side chain, leading to the formation of the unusual amino acid hypusine. eIF-5As are the only known proteins to undergo this modification, which is essential for their function.

It is found in the cytoplasm. Functionally, translation factor that promotes translation elongation and termination, particularly upon ribosome stalling at specific amino acid sequence contexts. Binds between the exit (E) and peptidyl (P) site of the ribosome and promotes rescue of stalled ribosome: specifically required for efficient translation of polyproline-containing peptides as well as other motifs that stall the ribosome. Acts as ribosome quality control (RQC) cofactor by joining the RQC complex to facilitate peptidyl transfer during CAT tailing step. Involved in actin dynamics and cell cycle progression, mRNA decay and probably in a pathway involved in stress response and maintenance of cell wall integrity. The polypeptide is Eukaryotic translation initiation factor 5A-2 (ANB1) (Saccharomyces cerevisiae (strain ATCC 204508 / S288c) (Baker's yeast)).